We begin with the raw amino-acid sequence, 337 residues long: Centromere protein N (337 aa).

Phosphoserine is present on residues S226 and S233.

The protein belongs to the CENP-N/CHL4 family. Component of the CENPA-NAC complex, at least composed of CENPA, CENPC, CENPH, CENPM, CENPN, CENPT and CENPU. The CENPA-NAC complex interacts with the CENPA-CAD complex, composed of CENPI, CENPK, CENPL, CENPO, CENPP, CENPQ, CENPR and CENPS. Interacts directly with CENPA. Identified in a centromere complex containing histones H2A, H2B and H4, and at least CENPA, CENPB, CENPC, CENPT, CENPN, HJURP, SUPT16H, SSRP1 and RSF1.

The protein resides in the nucleus. It localises to the chromosome. It is found in the centromere. Its subcellular location is the kinetochore. Functionally, component of the CENPA-NAC (nucleosome-associated) complex, a complex that plays a central role in assembly of kinetochore proteins, mitotic progression and chromosome segregation. The CENPA-NAC complex recruits the CENPA-CAD (nucleosome distal) complex and may be involved in incorporation of newly synthesized CENPA into centromeres. CENPN is the first protein to bind specifically to CENPA nucleosomes and the direct binding of CENPA nucleosomes by CENPN is required for centromere assembly. Required for chromosome congression and efficiently align the chromosomes on a metaphase plate. The protein is Centromere protein N (Cenpn) of Mus musculus (Mouse).